The primary structure comprises 333 residues: uncharacterized protein (333 aa).

This is an uncharacterized protein from Caenorhabditis elegans.